A 343-amino-acid polypeptide reads, in one-letter code: 3-dehydroquinate synthase (343 aa).

Residues 61-66 (SGEKYK), 95-99 (GVISD), 119-120 (TT), Lys132, Lys141, and 159-162 (FLKT) contribute to the NAD(+) site. Positions 174, 231, and 248 each coordinate Zn(2+).

The protein belongs to the sugar phosphate cyclases superfamily. Dehydroquinate synthase family. It depends on NAD(+) as a cofactor. Requires Co(2+) as cofactor. Zn(2+) is required as a cofactor.

It localises to the cytoplasm. It carries out the reaction 7-phospho-2-dehydro-3-deoxy-D-arabino-heptonate = 3-dehydroquinate + phosphate. The protein operates within metabolic intermediate biosynthesis; chorismate biosynthesis; chorismate from D-erythrose 4-phosphate and phosphoenolpyruvate: step 2/7. Functionally, catalyzes the conversion of 3-deoxy-D-arabino-heptulosonate 7-phosphate (DAHP) to dehydroquinate (DHQ). In Helicobacter pylori (strain J99 / ATCC 700824) (Campylobacter pylori J99), this protein is 3-dehydroquinate synthase.